Here is a 334-residue protein sequence, read N- to C-terminus: MEKINAVITGVGGYVPDYVLTNEEISRMVDTNDEWIMTRIGVKERRILNEEGLGTSYMARKAAKQLMQKTASNPDDIDAVIVATTTPDYHFPSTASILCDKLGLKNAFAFDLQAACCGFLYLMETAASLIASGRHKKIIIVGADKMSSMVNYQDRATCPIFGDGAAACMVEATTEDYGIMDSILRTDGKGLPFLHMKAGGSVCPPSYFTVDHKMHYLYQEGRTVFKYAVSNMSDITATIAEKNGLNKDNIDWVIPHQANLRIIDAVASRLEVPLEKVMINIQRYGNTSGATLPLCLWDYEKQLKKGDNLIFTAFGAGFTYGAVYVKWGYDGSKR.

Catalysis depends on residues cysteine 116 and histidine 256. Residues 257–261 (QANLR) are ACP-binding. Residue asparagine 286 is part of the active site.

The protein belongs to the thiolase-like superfamily. FabH family. As to quaternary structure, homodimer.

The protein localises to the cytoplasm. It carries out the reaction malonyl-[ACP] + acetyl-CoA + H(+) = 3-oxobutanoyl-[ACP] + CO2 + CoA. It participates in lipid metabolism; fatty acid biosynthesis. Functionally, catalyzes the condensation reaction of fatty acid synthesis by the addition to an acyl acceptor of two carbons from malonyl-ACP. Catalyzes the first condensation reaction which initiates fatty acid synthesis and may therefore play a role in governing the total rate of fatty acid production. Possesses both acetoacetyl-ACP synthase and acetyl transacylase activities. Its substrate specificity determines the biosynthesis of branched-chain and/or straight-chain of fatty acids. The sequence is that of Beta-ketoacyl-[acyl-carrier-protein] synthase III from Phocaeicola vulgatus (strain ATCC 8482 / DSM 1447 / JCM 5826 / CCUG 4940 / NBRC 14291 / NCTC 11154) (Bacteroides vulgatus).